The primary structure comprises 1018 residues: DNA polymerase gamma (1018 aa).

This sequence belongs to the DNA polymerase type-A family. Requires Mg(2+) as cofactor.

The protein localises to the mitochondrion. The catalysed reaction is DNA(n) + a 2'-deoxyribonucleoside 5'-triphosphate = DNA(n+1) + diphosphate. In terms of biological role, involved in the replication of mitochondrial DNA. The sequence is that of DNA polymerase gamma (mip1) from Schizosaccharomyces pombe (strain 972 / ATCC 24843) (Fission yeast).